Consider the following 68-residue polypeptide: Large ribosomal subunit protein bL32 (68 aa).

This sequence belongs to the bacterial ribosomal protein bL32 family.

In Orientia tsutsugamushi (strain Ikeda) (Rickettsia tsutsugamushi), this protein is Large ribosomal subunit protein bL32.